Reading from the N-terminus, the 329-residue chain is NADH-quinone oxidoreductase subunit H (329 aa).

9 helical membrane passes run leucine 9 to isoleucine 29, glycine 42 to phenylalanine 62, leucine 75 to isoleucine 95, isoleucine 117 to glycine 137, isoleucine 154 to valine 174, glycine 188 to alanine 208, leucine 238 to isoleucine 258, tryptophan 269 to tryptophan 291, and tryptophan 309 to isoleucine 329.

It belongs to the complex I subunit 1 family. In terms of assembly, NDH-1 is composed of 14 different subunits. Subunits NuoA, H, J, K, L, M, N constitute the membrane sector of the complex.

The protein resides in the cell inner membrane. It catalyses the reaction a quinone + NADH + 5 H(+)(in) = a quinol + NAD(+) + 4 H(+)(out). NDH-1 shuttles electrons from NADH, via FMN and iron-sulfur (Fe-S) centers, to quinones in the respiratory chain. The immediate electron acceptor for the enzyme in this species is believed to be ubiquinone. Couples the redox reaction to proton translocation (for every two electrons transferred, four hydrogen ions are translocated across the cytoplasmic membrane), and thus conserves the redox energy in a proton gradient. This subunit may bind ubiquinone. This chain is NADH-quinone oxidoreductase subunit H, found in Helicobacter acinonychis (strain Sheeba).